The following is a 944-amino-acid chain: Translation initiation factor IF-2 (944 aa).

Over residues 55–81 (LTGQAAAPAAAPSSAPRPGARSSAPKP) the composition is skewed to low complexity. A disordered region spans residues 55-329 (LTGQAAAPAA…RTKRAEFELR (275 aa)). Residues 82–92 (GGRPTPGPQPT) are compositionally biased toward pro residues. Residues 93–107 (AAPEVEAPEASDVPV) show a composition bias toward low complexity. Over residues 123 to 135 (ASRKAAAEEKAQA) the composition is skewed to basic and acidic residues. Composition is skewed to low complexity over residues 136–153 (EKSAASATPDAPAAETPS) and 211–222 (GQRPAAGAAGPR). Residues 223 to 236 (PAAPRPGSPRPGAP) show a composition bias toward pro residues. Low complexity predominate over residues 244 to 257 (GARPAGFGQRPAGA). Residues 258-269 (GRPGGAPGGAGR) are compositionally biased toward gly residues. Residues 270–283 (PGAPAAGGFQRPAG) are compositionally biased toward low complexity. Residues 284 to 310 (GFAGRPGGGGRGRGPGGGTAGAFGRGG) show a composition bias toward gly residues. Over residues 311–322 (GKSKSRKSKRTK) the composition is skewed to basic residues. The tr-type G domain occupies 437-611 (IRPPVVTVMG…LTADAGLDLR (175 aa)). Residues 446–453 (GHVDHGKT) are G1. 446–453 (GHVDHGKT) is a GTP binding site. Positions 471 to 475 (GITQH) are G2. Positions 496 to 499 (DTPG) are G3. Residues 496–500 (DTPGH) and 550–553 (NKVD) contribute to the GTP site. The G4 stretch occupies residues 550–553 (NKVD). Residues 586–588 (SAL) are G5.

The protein belongs to the TRAFAC class translation factor GTPase superfamily. Classic translation factor GTPase family. IF-2 subfamily.

Its subcellular location is the cytoplasm. In terms of biological role, one of the essential components for the initiation of protein synthesis. Protects formylmethionyl-tRNA from spontaneous hydrolysis and promotes its binding to the 30S ribosomal subunits. Also involved in the hydrolysis of GTP during the formation of the 70S ribosomal complex. In Clavibacter michiganensis subsp. michiganensis (strain NCPPB 382), this protein is Translation initiation factor IF-2.